Consider the following 321-residue polypeptide: Iron(3+)-hydroxamate-binding protein YxeB (321 aa).

An N-terminal signal peptide occupies residues 1 to 20 (MKKNILLVGMLVLLLMFVSA). Cys-21 carries N-palmitoyl cysteine lipidation. A lipid anchor (S-diacylglycerol cysteine) is attached at Cys-21. The segment covering 24 to 33 (TASKGSSSDS) has biased composition (low complexity). Positions 24–48 (TASKGSSSDSASEKTEMRTYKSPKG) are disordered. Positions 58–316 (RIVTDFYAGE…IITDMLIKRA (259 aa)) constitute a Fe/B12 periplasmic-binding domain.

This sequence belongs to the bacterial solute-binding protein 8 family. In terms of assembly, the complex is composed of an ATP-binding protein (FhuC), two transmembrane proteins (FhuB and FhuG) and a solute-binding protein (FhuD or YxeB).

The protein resides in the cell membrane. It is found in the membrane raft. Part of the ABC transporter complex FhuCBGD involved in iron(3+)-hydroxamate import. Binds the iron(3+)-hydroxamate complex and transfers it to the membrane-bound permease. Partially required for the transport of desferrioxamine. In Bacillus subtilis (strain 168), this protein is Iron(3+)-hydroxamate-binding protein YxeB (yxeB).